Reading from the N-terminus, the 24-residue chain is Antimicrobial peptide PGQ (24 aa).

The protein belongs to the gastrin/cholecystokinin family. Magainin subfamily. In terms of tissue distribution, is synthesized in the stomach and stored in a novel granular multinucleated cell in the gastric mucosa. It is stored as active, processed peptides in large granules within the granular gland secretions of the skin.

The protein localises to the secreted. Functionally, antimicrobial peptide. This Xenopus laevis (African clawed frog) protein is Antimicrobial peptide PGQ (pgq).